Here is a 133-residue protein sequence, read N- to C-terminus: uncharacterized protein (133 aa).

Positions 44-79 (VENQLASSKTEEQTLKISKKSNLNPAQKSSTFGLEN) are disordered. Polar residues predominate over residues 63–79 (KSNLNPAQKSSTFGLEN).

The protein localises to the plastid. Its subcellular location is the chloroplast. This is an uncharacterized protein from Chlorella vulgaris (Green alga).